Consider the following 389-residue polypeptide: Methylthioribose kinase (389 aa).

ATP contacts are provided by residues Asn37, Lys52, and 106 to 108 (EDL). Asp224 is a binding site for substrate. 241 to 243 (DPE) is an ATP binding site. A substrate-binding site is contributed by Arg331.

This sequence belongs to the methylthioribose kinase family. As to quaternary structure, homodimer.

The enzyme catalyses 5-(methylsulfanyl)-D-ribose + ATP = 5-(methylsulfanyl)-alpha-D-ribose 1-phosphate + ADP + H(+). The protein operates within amino-acid biosynthesis; L-methionine biosynthesis via salvage pathway; S-methyl-5-thio-alpha-D-ribose 1-phosphate from S-methyl-5'-thioadenosine (hydrolase route): step 2/2. Its function is as follows. Catalyzes the phosphorylation of methylthioribose into methylthioribose-1-phosphate. This is Methylthioribose kinase from Exiguobacterium sibiricum (strain DSM 17290 / CCUG 55495 / CIP 109462 / JCM 13490 / 255-15).